The sequence spans 293 residues: 33 kDa chaperonin (293 aa).

2 cysteine pairs are disulfide-bonded: C236-C238 and C269-C272.

The protein belongs to the HSP33 family. Post-translationally, under oxidizing conditions two disulfide bonds are formed involving the reactive cysteines. Under reducing conditions zinc is bound to the reactive cysteines and the protein is inactive.

Its subcellular location is the cytoplasm. Redox regulated molecular chaperone. Protects both thermally unfolding and oxidatively damaged proteins from irreversible aggregation. Plays an important role in the bacterial defense system toward oxidative stress. The sequence is that of 33 kDa chaperonin from Lactobacillus delbrueckii subsp. bulgaricus (strain ATCC 11842 / DSM 20081 / BCRC 10696 / JCM 1002 / NBRC 13953 / NCIMB 11778 / NCTC 12712 / WDCM 00102 / Lb 14).